An 861-amino-acid chain; its full sequence is E3 ubiquitin-protein ligase HECTD3 (861 aa).

The residue at position 2 (Ala2) is an N-acetylalanine. Ser12 bears the Phosphoserine mark. One can recognise a DOC domain in the interval 219-397; that stretch reads DEDLIHFLYD…TSLVRYPRLE (179 aa). One can recognise an HECT domain in the interval 512 to 857; it reads YEKPLDYRWP…NCVAIDTDMS (346 aa). Catalysis depends on Cys823, which acts as the Glycyl thioester intermediate.

In terms of assembly, interacts with TRIOBP. Interacts with STX8.

The protein localises to the cytoplasm. The protein resides in the perinuclear region. It carries out the reaction S-ubiquitinyl-[E2 ubiquitin-conjugating enzyme]-L-cysteine + [acceptor protein]-L-lysine = [E2 ubiquitin-conjugating enzyme]-L-cysteine + N(6)-ubiquitinyl-[acceptor protein]-L-lysine.. Its pathway is protein modification; protein ubiquitination. In terms of biological role, E3 ubiquitin ligases accepts ubiquitin from an E2 ubiquitin-conjugating enzyme in the form of a thioester and then directly transfers the ubiquitin to targeted substrates. Mediates ubiquitination of TRIOBP and its subsequent proteasomal degradation, thus facilitating cell cycle progression by regulating the turn-over of TRIOBP. Mediates also ubiquitination of STX8. The polypeptide is E3 ubiquitin-protein ligase HECTD3 (HECTD3) (Homo sapiens (Human)).